A 464-amino-acid polypeptide reads, in one-letter code: E3 ubiquitin-protein ligase ITT1 (464 aa).

A TRIAD supradomain region spans residues 176 to 455 (SNYHCCICME…EAYSGCYGRL (280 aa)). Residues Cys180, Cys183, Cys207, Cys210, Cys290, Cys300, Cys316, Cys319, Cys402, and Cys405 each contribute to the Zn(2+) site. An RING-type 1 zinc finger spans residues 180-236 (CCICMEMEKGVRMIKLPCENANVEHYLCRGCAKSYFTAMIQENRISSVRCPQCEYKE). An IBR-type zinc finger spans residues 267 to 338 (DTELCERYEK…HAWHGYNNKC (72 aa)). The segment at 402–431 (CPKCKVVVERSEGCNKMKCEVCGTLFCFIC) adopts an RING-type 2; atypical zinc-finger fold. The active site involves Cys415. 6 residues coordinate Zn(2+): Cys420, Cys423, Cys428, Cys431, His443, and Cys451.

This sequence belongs to the RBR family. RNF14 subfamily. Interacts with translation release factors eRF1 (SUP45) and eRF3 (SUP35) in vitro.

The catalysed reaction is [E2 ubiquitin-conjugating enzyme]-S-ubiquitinyl-L-cysteine + [acceptor protein]-L-lysine = [E2 ubiquitin-conjugating enzyme]-L-cysteine + [acceptor protein]-N(6)-ubiquitinyl-L-lysine.. Its pathway is protein modification; protein ubiquitination. E3 ubiquitin-protein ligase involved in translation quality control. Involved in the rescue of stalled ribosomes by promoting ubiquitination and degradation of proteins on stalled ribosomes. Specifically required to resolve RNA-protein cross-links caused by reactive aldehydes, which trigger translation stress by stalling ribosomes: acts by catalying 'Lys-6'-linked ubiquitination of RNA-protein cross-links, leading to their degradation. Interacts with the translation termination factors eRF1 (SUP45) and eRF3 (SUP35); overexpression decreases the efficiency of translation termination. The protein is E3 ubiquitin-protein ligase ITT1 of Saccharomyces cerevisiae (strain ATCC 204508 / S288c) (Baker's yeast).